A 384-amino-acid polypeptide reads, in one-letter code: Mitogen-activated protein kinase 8 (384 aa).

Residues 26–321 (YQNLKPIGSG…VDEALQHPYI (296 aa)) form the Protein kinase domain. ATP is bound by residues 32 to 40 (IGSGAQGIV) and lysine 55. Residue cysteine 116 is modified to S-nitrosocysteine. Aspartate 151 serves as the catalytic Proton acceptor. Threonine 183 is subject to Phosphothreonine; by MAP2K7. The short motif at 183–185 (TPY) is the TXY element. Tyrosine 185 is subject to Phosphotyrosine; by MAP2K4. A Phosphoserine modification is found at serine 377.

This sequence belongs to the protein kinase superfamily. CMGC Ser/Thr protein kinase family. MAP kinase subfamily. Binds to at least four scaffolding proteins, MAPK8IP1/JIP-1, MAPK8IP2/JIP-2, MAPK8IP3/JIP-3/JSAP1 and SPAG9/MAPK8IP4/JIP-4. These proteins also bind other components of the JNK signaling pathway. Forms a complex with MAPK8IP1 and ARHGEF28. Interacts with TP53 and WWOX. Interacts with JAMP. Interacts with NFATC4. Interacts with MECOM; regulates JNK signaling. Interacts with PIN1; this interaction mediates MAPK8 conformational changes leading to the binding of MAPK8 to its substrates. Interacts with HSF1 (via D domain and preferentially with hyperphosphorylated form); this interaction occurs under both normal growth conditions and immediately upon heat shock. Interacts (phosphorylated form) with NFE2; the interaction phosphorylates NFE2 in undifferentiated cells. Interacts with GRIPAP1. Interacts with POU5F1; phosphorylates POU5F1 at 'Ser-347'. Found in a complex with SH3RF1, RAC1, MAP3K11/MLK3, MAP2K7/MKK7 and MAPK8IP1/JIP1. Found in a complex with SH3RF1, RAC2, MAP3K7/TAK1, MAP2K7/MKK7, MAPK8IP1/JIP1 and MAPK9/JNK2. It depends on Mg(2+) as a cofactor. In terms of processing, phosphorylated by TAOK2. Dually phosphorylated on Thr-183 and Tyr-185 by MAP2K7 and MAP2K4, which activates the enzyme. May be phosphorylated at Thr-183 and Tyr-185 by MAP3K1/MEKK1. Phosphorylated form is more concentrated at synapses than none-phosphorylated. Brain (at protein level).

Its subcellular location is the cytoplasm. The protein localises to the nucleus. The protein resides in the synapse. The enzyme catalyses L-seryl-[protein] + ATP = O-phospho-L-seryl-[protein] + ADP + H(+). The catalysed reaction is L-threonyl-[protein] + ATP = O-phospho-L-threonyl-[protein] + ADP + H(+). With respect to regulation, inhibited by SERPINB3. Activated by threonine and tyrosine phosphorylation by either of two dual specificity kinases, MAP2K4 and MAP2K7. MAP2K4 shows a strong preference for Tyr-185 while MAP2K7 phosphorylates Tyr-183 preferentially. Inhibited by dual specificity phosphatases, such as DUSP1. In terms of biological role, serine/threonine-protein kinase involved in various processes such as cell proliferation, differentiation, migration, transformation and programmed cell death. Extracellular stimuli such as pro-inflammatory cytokines or physical stress stimulate the stress-activated protein kinase/c-Jun N-terminal kinase (SAP/JNK) signaling pathway. In this cascade, two dual specificity kinases MAP2K4/MKK4 and MAP2K7/MKK7 phosphorylate and activate MAPK8/JNK1. In turn, MAPK8/JNK1 phosphorylates a number of transcription factors, primarily components of AP-1 such as JUN, JDP2 and ATF2 and thus regulates AP-1 transcriptional activity. Phosphorylates the replication licensing factor CDT1, inhibiting the interaction between CDT1 and the histone H4 acetylase HBO1 to replication origins. Loss of this interaction abrogates the acetylation required for replication initiation. Promotes stressed cell apoptosis by phosphorylating key regulatory factors including p53/TP53 and Yes-associates protein YAP1. In T-cells, MAPK8 and MAPK9 are required for polarized differentiation of T-helper cells into Th1 cells. Contributes to the survival of erythroid cells by phosphorylating the antagonist of cell death BAD upon EPO stimulation. Mediates starvation-induced BCL2 phosphorylation, BCL2 dissociation from BECN1, and thus activation of autophagy. Phosphorylates STMN2 and hence regulates microtubule dynamics, controlling neurite elongation in cortical neurons. In the developing brain, through its cytoplasmic activity on STMN2, negatively regulates the rate of exit from multipolar stage and of radial migration from the ventricular zone. Phosphorylates several other substrates including heat shock factor protein 4 (HSF4), the deacetylase SIRT1, ELK1, or the E3 ligase ITCH. Phosphorylates the CLOCK-BMAL1 heterodimer and plays a role in the regulation of the circadian clock. Phosphorylates the heat shock transcription factor HSF1, suppressing HSF1-induced transcriptional activity. Phosphorylates POU5F1, which results in the inhibition of POU5F1's transcriptional activity and enhances its proteasomal degradation. Phosphorylates JUND and this phosphorylation is inhibited in the presence of MEN1. In neurons, phosphorylates SYT4 which captures neuronal dense core vesicles at synapses. Phosphorylates EIF4ENIF1/4-ET in response to oxidative stress, promoting P-body assembly. Phosphorylates SIRT6 in response to oxidative stress, stimulating its mono-ADP-ribosyltransferase activity. Phosphorylates NLRP3, promoting assembly of the NLRP3 inflammasome. Phosphorylates ALKBH5 in response to reactive oxygen species (ROS), promoting ALKBH5 sumoylation and inactivation. The protein is Mitogen-activated protein kinase 8 (Mapk8) of Mus musculus (Mouse).